A 132-amino-acid chain; its full sequence is Small ribosomal subunit protein uS8 (132 aa).

It belongs to the universal ribosomal protein uS8 family. As to quaternary structure, part of the 30S ribosomal subunit. Contacts proteins S5 and S12.

In terms of biological role, one of the primary rRNA binding proteins, it binds directly to 16S rRNA central domain where it helps coordinate assembly of the platform of the 30S subunit. This Clostridium tetani (strain Massachusetts / E88) protein is Small ribosomal subunit protein uS8.